A 948-amino-acid polypeptide reads, in one-letter code: MDVAESPELDPHSPEDEEQPALSDDDILRESGSEQDLDGAGERASDLEEEENATRVQSQEETRSDEEDRASEPKSQDQDSEAHELSRGPAGSPCEEGDDVEEDGTSDLRDEASSVTRELDEHELDYDEEVPEEPAPAAQEEEAEKAGAEEEEEKGEGAPGEEGKPDVQSVGEQEPTEAAKEKKKEDDDGEIDDGEIDDDDLEEGEVKDPSDRKVRPRPTCRFFMKGNCTWGMSCRFIHPGVNDKGNYSLITKAEPFPPNGAPPLGPHPLMPANPWGGPVVDEILPPPPPEPPTESAWERGLRHAKEVLKKATIRKEQEPDFEEKRFTVTIGEDDREFDKENEVFRDWNSRVPRDVRDTTLEPYADPYYDYEIERFWRGGQYENFRVQYTEAEPYHNYRERERERERENRQRERERERERDRERERRQRERERERERERDKERQRRKEEWERERAKRDEKDRQHRDRDRDKDREKDKEKPKPRSPQPPSRQAEPPKKESTSVGPQVKRADEWKDPWRRSKSPKKKLGVSVSPSRARRRRKTSASSASASNSSRSSSRSSSYSGSGSSRSRSRSSSYSSYSSRSSRHSSFSGSRSRSRSFSSSPSPSPTPSPHRPPVRTKGEPAPPPGKAGEKSIKKPAPPPAPPQATKTTAPGPEPAKPGDLREARRKERQTRTPPRRRTLSGSGSGSGSSYSGSSSRSRSLSVSSVSSVSSATSSSSSVHSVDSDDMYADLASPVSSASSRSPTPAQTKKERGKSKKEDGVREEKRRRDPSAQPPKSSKAPAGGKASQQAAAPQPAVPGQPQQGSFVAHKEIKLTLLNKAADKGSRKRYEPSDKDRQSPPAKKANLSPDRGSRDRKSGGRMGSPKPERQRGQNAKAPAAPADRKRPLSPQSKGSSKVTSVPGKATDTATAGTKSGKASTLSRREELLKQLKAVEDAIARKRAKIPGKV.

Methionine 1 bears the N-acetylmethionine mark. A disordered region spans residues methionine 1–threonine 219. Phosphoserine is present on serine 6. The span at glutamate 15 to aspartate 25 shows a compositional bias: acidic residues. 8 positions are modified to phosphoserine: serine 33, serine 45, serine 58, serine 64, serine 71, serine 75, serine 80, and serine 92. The segment covering alanine 70–serine 86 has biased composition (basic and acidic residues). Residues glutamate 95–threonine 105 are compositionally biased toward acidic residues. At threonine 105 the chain carries Phosphothreonine. 2 positions are modified to phosphoserine: serine 106 and serine 114. The segment covering serine 106–aspartate 120 has biased composition (basic and acidic residues). Acidic residues-rich tracts occupy residues glutamate 121 to glutamate 132 and glutamine 139 to lysine 154. Serine 169 bears the Phosphoserine mark. Basic and acidic residues predominate over residues glutamate 177–aspartate 186. Residues aspartate 187 to glutamate 203 show a composition bias toward acidic residues. A compositionally biased stretch (basic and acidic residues) spans glycine 204 to lysine 213. The C3H1-type zinc-finger motif lies at arginine 215 to valine 241. At glycine 245 the chain carries Omega-N-methylarginine. Disordered stretches follow at residues alanine 272 to alanine 296 and tyrosine 388 to arginine 922. Positions glutamate 392–lysine 480 are enriched in basic and acidic residues. The stretch at histidine 395–aspartate 460 forms a coiled coil. Serine 483 bears the Phosphoserine mark. Lysine 506 is covalently cross-linked (Glycyl lysine isopeptide (Lys-Gly) (interchain with G-Cter in SUMO2)). Over residues lysine 506 to arginine 516 the composition is skewed to basic and acidic residues. 3 positions are modified to phosphoserine: serine 528, serine 530, and serine 532. Positions serine 541 to proline 602 are enriched in low complexity. The span at serine 603–arginine 612 shows a compositional bias: pro residues. Glycyl lysine isopeptide (Lys-Gly) (interchain with G-Cter in SUMO2) cross-links involve residues lysine 618 and lysine 657. Residues lysine 657 to arginine 666 show a composition bias toward basic and acidic residues. Composition is skewed to low complexity over residues glycine 688 to serine 721 and alanine 732 to alanine 746. Residues lysine 756–proline 770 show a composition bias toward basic and acidic residues. Low complexity predominate over residues proline 774–glycine 804. Residue lysine 810 is modified to N6-acetyllysine. Lysine 813 is covalently cross-linked (Glycyl lysine isopeptide (Lys-Gly) (interchain with G-Cter in SUMO2)). Residues alanine 820–glutamine 837 are compositionally biased toward basic and acidic residues. Residues serine 838, serine 847, serine 863, serine 888, and serine 891 each carry the phosphoserine modification. The segment covering serine 888–threonine 898 has biased composition (polar residues). Low complexity predominate over residues glycine 902–threonine 919. Residue lysine 903 forms a Glycyl lysine isopeptide (Lys-Gly) (interchain with G-Cter in SUMO2) linkage. Residues lysine 916–proline 945 adopt a coiled-coil conformation.

As to quaternary structure, interacts with ZFC3H1 in a RNase-insensitive manner.

Its subcellular location is the nucleus. This chain is Zinc finger CCCH domain-containing protein 18 (Zc3h18), found in Mus musculus (Mouse).